Here is a 448-residue protein sequence, read N- to C-terminus: Bifunctional F420 biosynthesis protein FbiB (448 aa).

The interval 1 to 244 is coenzyme F420:L-glutamate ligase; the sequence is MTGPEHGSAS…PGANDLFWLG (244 aa). Residues 20–23, serine 50, and lysine 55 each bind GTP; that span reads LPEF. Residue aspartate 109 participates in a divalent metal cation binding. A GTP-binding site is contributed by asparagine 112. Aspartate 150 and threonine 151 together coordinate a divalent metal cation. The interval 245–448 is dehydro-coenzyme F420-0 reductase; the sequence is TAEALELGRQ…VPAADLLILK (204 aa). FMN contacts are provided by residues 260–264 and alanine 288; that span reads RRSVR. A coenzyme F420-(gamma-Glu)n-binding site is contributed by aspartate 320. 2 residues coordinate FMN: glycine 399 and arginine 436.

In the N-terminal section; belongs to the CofE family. It depends on Mg(2+) as a cofactor. Mn(2+) serves as cofactor. Requires K(+) as cofactor.

The enzyme catalyses oxidized coenzyme F420-0 + GTP + L-glutamate = oxidized coenzyme F420-1 + GDP + phosphate + H(+). It carries out the reaction oxidized coenzyme F420-1 + GTP + L-glutamate = oxidized coenzyme F420-2 + GDP + phosphate + H(+). It catalyses the reaction oxidized coenzyme F420-(gamma-L-Glu)(n) + GTP + L-glutamate = oxidized coenzyme F420-(gamma-L-Glu)(n+1) + GDP + phosphate + H(+). The catalysed reaction is oxidized coenzyme F420-0 + FMN + H(+) = dehydro coenzyme F420-0 + FMNH2. Its pathway is cofactor biosynthesis; coenzyme F420 biosynthesis. In terms of biological role, bifunctional enzyme that catalyzes the GTP-dependent successive addition of multiple gamma-linked L-glutamates to the L-lactyl phosphodiester of 7,8-didemethyl-8-hydroxy-5-deazariboflavin (F420-0) to form polyglutamated F420 derivatives, and the FMNH2-dependent reduction of dehydro-F420-0 to form F420-0. This chain is Bifunctional F420 biosynthesis protein FbiB, found in Mycobacterium tuberculosis (strain ATCC 25177 / H37Ra).